A 1172-amino-acid chain; its full sequence is DNA-directed RNA polymerase subunit beta (1172 aa).

This sequence belongs to the RNA polymerase beta chain family. The RNAP catalytic core consists of 2 alpha, 1 beta, 1 beta' and 1 omega subunit. When a sigma factor is associated with the core the holoenzyme is formed, which can initiate transcription.

The catalysed reaction is RNA(n) + a ribonucleoside 5'-triphosphate = RNA(n+1) + diphosphate. Functionally, DNA-dependent RNA polymerase catalyzes the transcription of DNA into RNA using the four ribonucleoside triphosphates as substrates. This is DNA-directed RNA polymerase subunit beta from Mycobacterium sp. (strain JLS).